Consider the following 119-residue polypeptide: MARTVATFFLMLVSLACLDAIERPPQVQVYTRHPPENGKTNFLNCYVSQFHPPHIEIELLKNGKKIEKVEMSDLSFSKDWTFYLLAHTEFTPTANDKYACRVSHVTLKEPKVVTWERDM.

Residues 1-20 (MARTVATFFLMLVSLACLDA) form the signal peptide. One can recognise an Ig-like C1-type domain in the interval 25 to 114 (PQVQVYTRHP…VTLKEPKVVT (90 aa)). An intrachain disulfide couples cysteine 45 to cysteine 100.

The protein belongs to the beta-2-microglobulin family. In terms of assembly, heterodimer of an alpha chain and a beta chain. Beta-2-microglobulin is the beta-chain of major histocompatibility complex class I molecules.

It localises to the secreted. Functionally, component of the class I major histocompatibility complex (MHC). Involved in the presentation of peptide antigens to the immune system. In Sigmodon hispidus (Hispid cotton rat), this protein is Beta-2-microglobulin (B2M).